The primary structure comprises 152 residues: Deoxyuridine 5'-triphosphate nucleotidohydrolase (152 aa).

Substrate contacts are provided by residues 71–73 (RSG), asparagine 84, 88–90 (LID), and lysine 98.

Belongs to the dUTPase family. It depends on Mg(2+) as a cofactor.

It carries out the reaction dUTP + H2O = dUMP + diphosphate + H(+). Its pathway is pyrimidine metabolism; dUMP biosynthesis; dUMP from dCTP (dUTP route): step 2/2. Its function is as follows. This enzyme is involved in nucleotide metabolism: it produces dUMP, the immediate precursor of thymidine nucleotides and it decreases the intracellular concentration of dUTP so that uracil cannot be incorporated into DNA. This chain is Deoxyuridine 5'-triphosphate nucleotidohydrolase, found in Legionella pneumophila (strain Paris).